The following is a 524-amino-acid chain: Na(+)/H(+) antiporter NhaB (524 aa).

9 consecutive transmembrane segments (helical) span residues phenylalanine 13 to proline 33, leucine 98 to phenylalanine 118, alanine 140 to valine 160, phenylalanine 239 to leucine 259, alanine 304 to valine 324, glycine 325 to glycine 345, leucine 358 to isoleucine 378, alanine 448 to isoleucine 468, and alanine 479 to valine 499.

This sequence belongs to the NhaB Na(+)/H(+) (TC 2.A.34) antiporter family.

It localises to the cell inner membrane. It carries out the reaction 2 Na(+)(in) + 3 H(+)(out) = 2 Na(+)(out) + 3 H(+)(in). Na(+)/H(+) antiporter that extrudes sodium in exchange for external protons. This Yersinia pestis (strain Pestoides F) protein is Na(+)/H(+) antiporter NhaB.